The following is a 2890-amino-acid chain: MSKKIPLKNRLRADFTKTPTDLEVPNLLLLQRDSYDSFLYSKDGKESGIEKVFKSIFPIQDAQNRITLEYAGCEFGKAKYTVREAMERGITYSIPLKIKVRLILWEKDAKNGEKTGIKDIKEQSIFIREIPLMTEHTSFIINGVERVVVNQLHRSPGVIFKEEESSTSLNKLIYTGQIIPDRGSWLYFEYDSKDILYARINKRRKVPVTILFRAMDYQKQDIIKIFYPLVKVRYENDKYLIPFASLDANQRMEFDLKDAQGKTILLAGKKLTPRKIKELKENHLEWVEYPMDILLNRYLAEPVMAGKEILLDMLTQLDKNKLDKIHDLGVQEFVIINDLALGHDASIIHSFLADYESLRLLKQTEKIDDENALAAIRIYKVMRPGEPITTEVAKQFVKQLFFDPERYDLTMVGRMKMNHKLGLHVPDYITTLTHEDIITTVKYLMKIKNNQGKIDDRDHLGNRRIRAVGELLANELHSGLVKMQKTIKDKLTTMSGAFDSLMPHDLVNSKMITSTIMEFFMGGQLSQFMDQTNPLSEVTHKRRLSALGEGGLVKDRVGFEARDVHPTHYGRICPIETPEGQNIGLINTLSTFTRVNDLGFIEAPYKKVVDGKVMGETIYLTAIQEDSHVIAPASTPIDEEGNILGDLIETRVEGEIVLNEKSKVTLMDLSSSMLVGVAASLIPFLEHDDANRALMGTNMQRQAVPLLRSDAPIVGTGIEKIIARDSWGAIKANRAGVVEKIDSKNIYILGEGKEEAYIDAYSLQKNLRTNQNTSFNQVPIVKVGDKVEAGQIIADGPSMDRGELALGKNVRVAFMPWNGYNFEDAIVVSERITKDDIFTSTHIYEKEVDARELKHGVEEFTADIPDVKEEALAHLDESGIVKVGTYVSAGMILVGKTSPKGEIKSTPEERLLRAIFGDKAGHVVNKSLYCPPSLEGTVIDVKVFTKKGYEKDARVLSAYEEEKAKLDMEHFDRLTMLNREELLRVSSLLSQAILEEPFSHNGKDYKEGDQIPKEVIASINRFTLASLVKKYSKEVQNQYEITKNNFLEQKKVLGEEHEEKLSILEKDDILPNGVIKKVKLYIATKRKLKVGDKMAGRHGNKGIVSNIVPVADMPYTADGEPVDIVLNPLGVPSRMNIGQILEMHLGLVGKEFGKQIASMLENQTRDFVKELRTKMLEIANAINEKDLLTIHALENCSDEELLEYAKDWSRGVKLAIPVFEGISQEKFYKLFELAKIAMDGKMDLYDGRTGEKMRERVNVGYMYMIKLHHLVDEKVHARSTGPYSLVTHQPVGGKALFGGQRFGEMEVWALEAYGAAHTLKEMLTIKSDDIRGRENAYRAIAKGEQVGESEIPETFYVLTKELQSLALDINIFGDEMDEDGMPKPIVIKEDDRPKDFSSFQLTLASPEKIHSWSYGEVKKPETINYRTLKPERDGLFCMKIFGPTKDYECLCGKYKKPRFKDIGTCEKCGVAITHSKVRRFRMGHIELATPVAHIWYVNSLPSRIGTLLGVKMKDLERVLYYEAYIVKEPGEAAYDNEGTKLVAKYDILNEEQYQNISRRYEDRGFVAQMGGEAIKDLLEEIDLIVLLQSLKEEVKETNSDAKKKKLIKRLKVVESFLNSGNRPEWMMLTVLPVLPPDLRPLVALDGGKFAVSDVNELYRRVINRNQRLKRLMELGAPEIIVRNEKRMLQEAVDVLFDNGRSTNAVKGANKRPLKSLSEIIKGKQGRFRQNLLGKRVDFSGRSVIVVGPNLKMDECGLPKNMALELFKPHLLSKLEERGYATTLKQAKRMIEQKSSEVWECLQEITEGYPVLLNRAPTLHKQSIQAFHPKLIDGKAIQLHPLVCSAFNADFDGDQMAVHVPLSQEAIAECKVLMLSSMNILLPASGKAVAIPSQDMVLGLYYLSLEKSGVKGEHKLFSSVNEIITAIDTKELDIHAKIRVLDKGNIIATSAGRMIIRSILPDFIPTDLWNRPMKKKDIGVLVDYVHKVGGIGITATFLDNLKTLGFRYATKAGISISMEDIITPKDKQKMVEKAKVEVKKIQQQYDQGLLTDQERYNKIIDTWTEVNDKMSKEMMTAIAKDKEGFNSIYMMADSGARGSAAQIRQLSAMRGLMTKPDGSIIETPIISNFKEGLNVLEYFNSTHGARKGLADTALKTANAGYLTRKLIDVSQNVKVVSDDCGTHEGIEITDIAVGSELIEPLEERIFGRVLLEDVIDPITNEILLYADTLIDEESAKKVVEAGIKSITIRTPVTCKAPKGVCAKCYGLNLGEGKMSYPGEAVGVVAAQSIGEPGTQLTLRTFHVGGTASRSQDEREIVASKEGFVRFYNLKTYTNKEGKNIIANRRNASILVVEPKIKAPFDGELSIETVYEEVIVSVKNGEQEAKFVLRRSDIVKPSELAGVGGKIEGKVYLHYANGHKIHKGGSIADIIQEGWNVPNRIPYASELLVKDNDPIVQDVYVKEKGVIKYYVLEVNHLERTHGIKKGDMVSEKGLFAVIADDNGREAARHYIARGSEILIDDNSEVSANSLISKPTTNTLKTIATWDPYNTPIIADFEGKVSFVDIIAGVTVAEKEDENTGITSLVVNDYIPSGYKPSLFLEGVNGEEVRYFLEPKTSIAISDGSSVEQAEVLAKIPKATVKSKDITGGLPRVSELFEARKPKPKDVAILSEIDGIVSFGKAIRNKEHIIVTSKDGRKMDYLVDKGKQILVHADEFVHAGEAMTDGVVSNHDILRISGEKELYKYIVSEVQQVYRRQGVSIADKHIEIIVSQMLRQVRILDSGDSKFIEGDLVSKKLFKEENARVIALKGEPAIAEPVLLGITRAAIGSDSIISAASFQETTKVLTEASIAMKKDFLEDLKENVVLGRMIPVGTGMYKNKKIVLRTIEDSPKI.

The interval 1–1377 is DNA-directed RNA polymerase subunit beta; that stretch reads MSKKIPLKNR…DINIFGDEMD (1377 aa). Positions 1384-2890 are DNA-directed RNA polymerase subunit beta'; sequence PIVIKEDDRP…LRTIEDSPKI (1507 aa). Zn(2+) contacts are provided by C1449, C1451, C1465, and C1468. Positions 1849, 1851, and 1853 each coordinate Mg(2+). Zn(2+)-binding residues include C2179, C2253, C2260, and C2263.

It in the N-terminal section; belongs to the RNA polymerase beta chain family. This sequence in the C-terminal section; belongs to the RNA polymerase beta' chain family. As to quaternary structure, the RNAP catalytic core consists of 2 alpha, 1 beta/beta' and 1 omega subunit. When a sigma factor is associated with the core the holoenzyme is formed, which can initiate transcription. Mg(2+) is required as a cofactor. Requires Zn(2+) as cofactor.

It carries out the reaction RNA(n) + a ribonucleoside 5'-triphosphate = RNA(n+1) + diphosphate. In terms of biological role, DNA-dependent RNA polymerase catalyzes the transcription of DNA into RNA using the four ribonucleoside triphosphates as substrates. In Helicobacter acinonychis (strain Sheeba), this protein is Bifunctional DNA-directed RNA polymerase subunit beta-beta' (rpoBC).